The following is a 1893-amino-acid chain: Protein TIC 214 (1893 aa).

The next 6 helical transmembrane spans lie at 18 to 38, 63 to 83, 87 to 107, 127 to 147, 175 to 195, and 224 to 244; these read IINS…FSIG, AITG…YAPL, LGRP…HFFW, LSIQ…HFIL, VGWL…LVWI, and IFSI…PSPI. Basic and acidic residues-rich tracts occupy residues 249-258 and 268-287; these read MKETSETEER and EIER…RSTE. Positions 249–317 are disordered; sequence MKETSETEER…TEEIRVNGKE (69 aa). The segment covering 298 to 309 has biased composition (acidic residues); that stretch reads EKEDPDKIDETE. The helical transmembrane segment at 1126 to 1146 threads the bilayer; sequence LHYFIKFFIERIYIDILLCLI.

It belongs to the TIC214 family. In terms of assembly, part of the Tic complex.

The protein resides in the plastid. The protein localises to the chloroplast inner membrane. Involved in protein precursor import into chloroplasts. May be part of an intermediate translocation complex acting as a protein-conducting channel at the inner envelope. The chain is Protein TIC 214 from Vitis vinifera (Grape).